Reading from the N-terminus, the 350-residue chain is Palmitoyltransferase erf2 (350 aa).

Residues 1–86 lie on the Cytoplasmic side of the membrane; sequence MSYEKHSDAK…RLQMSSQYKA (86 aa). A helical membrane pass occupies residues 87-107; the sequence is FLISLFALILPGVLFFIFSAF. Residues 108–112 lie on the Lumenal side of the membrane; the sequence is WLWHH. The helical transmembrane segment at 113–133 threads the bilayer; the sequence is VSPAVPITFAYLYALAVVSMF. Over 134 to 225 the chain is Cytoplasmic; sequence KCSTADPGIL…NTCIGRRNYR (92 aa). The region spanning 182–232 is the DHHC domain; it reads VYCHTCHLYRPPRASHCHLCDNCVEYLDHHCIWLNTCIGRRNYRYYFIFLL. C212 functions as the S-palmitoyl cysteine intermediate in the catalytic mechanism. The helical transmembrane segment at 226–246 threads the bilayer; it reads YYFIFLLSVVLSALYLTGLGF. Residues 247–270 are Lumenal-facing; it reads YTSIGSFHESTDTNFAAHLRRPWA. A helical transmembrane segment spans residues 271–291; the sequence is GVSFFLGIYGALGAILPGILF. Residues 292–350 are Cytoplasmic-facing; the sequence is CYQCYLISVGQNVHEYLRAKSTETEDVHPFHDSIWLNFLVVLCRPKNVSYVRPTRKSYV.

It belongs to the DHHC palmitoyltransferase family. ERF2/ZDHHC9 subfamily. Interacts with erf4. In terms of processing, autopalmitoylated.

The protein localises to the endoplasmic reticulum membrane. Its subcellular location is the golgi apparatus. It localises to the golgi stack membrane. It catalyses the reaction L-cysteinyl-[protein] + hexadecanoyl-CoA = S-hexadecanoyl-L-cysteinyl-[protein] + CoA. Its function is as follows. The erf2-erf4 complex is a palmitoyltransferase with a major role in driving sexual development. Palmitoylates ras1. Palmitoylates isp3. Palmitoylates rho3. This chain is Palmitoyltransferase erf2, found in Schizosaccharomyces pombe (strain 972 / ATCC 24843) (Fission yeast).